Consider the following 582-residue polypeptide: Inactive metallocarboxypeptidase ECM14 (582 aa).

The first 20 residues, 1–20 (MHILQVITGATLVSVPFVSA), serve as a signal peptide directing secretion. A propeptide spanning residues 21–172 (IPSSTSEFLP…QAVYESYPQP (152 aa)) is cleaved from the precursor. Positions 200-522 (DYQPLSVIIP…NAVLVFGQFL (323 aa)) constitute a Peptidase M14 domain. 2 residues coordinate Zn(2+): histidine 265 and glutamate 268. Substrate is bound by residues 265–268 (HARE), arginine 323, and 340–341 (DR). The cysteines at positions 334 and 357 are disulfide-linked. Asparagine 381 and asparagine 387 each carry an N-linked (GlcNAc...) asparagine glycan. Histidine 397 contacts Zn(2+). Residue 398–399 (SY) coordinates substrate. Acidic residues predominate over residues 561–571 (SNQLEDDDNEN). The disordered stretch occupies residues 561–582 (SNQLEDDDNENDTLLGFRTQKV). Asparagine 571 carries an N-linked (GlcNAc...) asparagine glycan.

Belongs to the peptidase M14 family. Zn(2+) serves as cofactor.

Its subcellular location is the vacuole. It localises to the secreted. Inactive carboxypeptidase that may play a role in cell wall organization and biogenesis. The polypeptide is Inactive metallocarboxypeptidase ECM14 (ECM14) (Coccidioides posadasii (strain C735) (Valley fever fungus)).